The sequence spans 265 residues: Pyrroline-5-carboxylate reductase (265 aa).

It belongs to the pyrroline-5-carboxylate reductase family.

It localises to the cytoplasm. It catalyses the reaction L-proline + NADP(+) = (S)-1-pyrroline-5-carboxylate + NADPH + 2 H(+). The enzyme catalyses L-proline + NAD(+) = (S)-1-pyrroline-5-carboxylate + NADH + 2 H(+). It functions in the pathway amino-acid biosynthesis; L-proline biosynthesis; L-proline from L-glutamate 5-semialdehyde: step 1/1. Functionally, catalyzes the reduction of 1-pyrroline-5-carboxylate (PCA) to L-proline. The chain is Pyrroline-5-carboxylate reductase from Aquifex aeolicus (strain VF5).